Consider the following 332-residue polypeptide: Anthranilate phosphoribosyltransferase (332 aa).

Residues G79, 82–83 (GD), T87, 89–92 (NIST), 107–115 (KHGNRSVSS), and S119 each bind 5-phospho-alpha-D-ribose 1-diphosphate. Anthranilate is bound at residue G79. S91 contributes to the Mg(2+) binding site. Residue N110 participates in anthranilate binding. An anthranilate-binding site is contributed by R165. Mg(2+) contacts are provided by D223 and E224.

This sequence belongs to the anthranilate phosphoribosyltransferase family. As to quaternary structure, homodimer. Requires Mg(2+) as cofactor.

The catalysed reaction is N-(5-phospho-beta-D-ribosyl)anthranilate + diphosphate = 5-phospho-alpha-D-ribose 1-diphosphate + anthranilate. Its pathway is amino-acid biosynthesis; L-tryptophan biosynthesis; L-tryptophan from chorismate: step 2/5. Catalyzes the transfer of the phosphoribosyl group of 5-phosphorylribose-1-pyrophosphate (PRPP) to anthranilate to yield N-(5'-phosphoribosyl)-anthranilate (PRA). This chain is Anthranilate phosphoribosyltransferase, found in Vibrio vulnificus (strain YJ016).